A 327-amino-acid chain; its full sequence is Interleukin-12 subunit beta (327 aa).

A signal peptide spans 1–22 (MCHQKLTISWFAMVLLVSPLMA). Residues 23–106 (IWELEKDVYV…LSHSRLLLHK (84 aa)) enclose the Ig-like C2-type domain. An intrachain disulfide couples Cys50 to Cys90. 4 N-linked (GlcNAc...) asparagine glycosylation sites follow: Asn125, Asn135, Asn223, and Asn315. Residues 238 to 327 (PPKNLQLKPL…WSEWASVSCN (90 aa)) enclose the Fibronectin type-III domain.

This sequence belongs to the IL-12B family. Heterodimer with IL12A; disulfide-linked. The heterodimer is known as interleukin IL-12. Heterodimer with IL23A; disulfide-linked. The heterodimer is known as interleukin IL-23. Also secreted as a monomer. Interacts with NBR1; this interaction promotes IL-12 secretion.

It localises to the secreted. In terms of biological role, cytokine that can act as a growth factor for activated T and NK cells, enhance the lytic activity of NK/lymphokine-activated killer cells, and stimulate the production of IFN-gamma by resting PBMC. Functionally, associates with IL23A to form the IL-23 interleukin, a heterodimeric cytokine which functions in innate and adaptive immunity. IL-23 may constitute with IL-17 an acute response to infection in peripheral tissues. IL-23 binds to a heterodimeric receptor complex composed of IL12RB1 and IL23R, activates the Jak-Stat signaling cascade, stimulates memory rather than naive T-cells and promotes production of pro-inflammatory cytokines. IL-23 induces autoimmune inflammation and thus may be responsible for autoimmune inflammatory diseases and may be important for tumorigenesis. This chain is Interleukin-12 subunit beta (IL12B), found in Sigmodon hispidus (Hispid cotton rat).